Consider the following 295-residue polypeptide: Glutamyl-Q tRNA(Asp) synthetase (295 aa).

Residues arginine 5–serine 9 and glutamate 41 each bind L-glutamate. Residues proline 8 to serine 18 carry the 'HIGH' region motif. The Zn(2+) site is built by cysteine 97, cysteine 99, tyrosine 117, and cysteine 121. Tyrosine 178 and arginine 196 together coordinate L-glutamate. The 'KMSKS' region signature appears at lysine 234–glutamine 238. Lysine 237 contacts ATP.

This sequence belongs to the class-I aminoacyl-tRNA synthetase family. GluQ subfamily. It depends on Zn(2+) as a cofactor.

In terms of biological role, catalyzes the tRNA-independent activation of glutamate in presence of ATP and the subsequent transfer of glutamate onto a tRNA(Asp). Glutamate is transferred on the 2-amino-5-(4,5-dihydroxy-2-cyclopenten-1-yl) moiety of the queuosine in the wobble position of the QUC anticodon. The polypeptide is Glutamyl-Q tRNA(Asp) synthetase (Neisseria meningitidis serogroup C / serotype 2a (strain ATCC 700532 / DSM 15464 / FAM18)).